The primary structure comprises 299 residues: tRNA dimethylallyltransferase (299 aa).

13–20 serves as a coordination point for ATP; the sequence is GPTASGKT. 15–20 is a substrate binding site; the sequence is TASGKT. The interval 38–41 is interaction with substrate tRNA; it reads DSRQ.

The protein belongs to the IPP transferase family. In terms of assembly, monomer. Requires Mg(2+) as cofactor.

The enzyme catalyses adenosine(37) in tRNA + dimethylallyl diphosphate = N(6)-dimethylallyladenosine(37) in tRNA + diphosphate. Functionally, catalyzes the transfer of a dimethylallyl group onto the adenine at position 37 in tRNAs that read codons beginning with uridine, leading to the formation of N6-(dimethylallyl)adenosine (i(6)A). The chain is tRNA dimethylallyltransferase from Synechococcus sp. (strain CC9605).